Consider the following 590-residue polypeptide: Probable metalloendopeptidase G1-type (590 aa).

Zn(2+) is bound at residue histidine 41. Glutamate 44 is a catalytic residue. Residue histidine 45 participates in Zn(2+) binding.

Belongs to the peptidase M44 family. The cofactor is Zn(2+).

Seems to be involved in viral proteins maturation by cleavage at Ala-Gly-|-Xaa motifs. This is Probable metalloendopeptidase G1-type (GP045L) from Oryctolagus cuniculus (Rabbit).